The sequence spans 128 residues: Azurin (128 aa).

The 128-residue stretch at 1–128 folds into the Plastocyanin-like domain; that stretch reads AECKVTVDST…SMMKGTVTVK (128 aa). Cysteine 3 and cysteine 26 are disulfide-bonded. Cu cation contacts are provided by histidine 46, cysteine 112, histidine 117, and methionine 121.

The protein resides in the periplasm. Transfers electrons from cytochrome c551 to cytochrome oxidase. The sequence is that of Azurin from Pseudomonas fluorescens biotype A.